We begin with the raw amino-acid sequence, 1337 residues long: Rho GTPase-activating protein 29 (1337 aa).

Residues 1–13 (MFRQGSNSGNKRM) show a composition bias toward polar residues. Disordered stretches follow at residues 1 to 20 (MFRQ…ARLS), 369 to 397 (REEY…LEKK), 513 to 551 (SSKT…ADEV), and 564 to 654 (ERRS…TGLS). The 264-residue stretch at 225–488 (EQVDLLLLKN…QAKKYEPGQR (264 aa)) folds into the F-BAR domain. Positions 326–443 (LLARKNDLDK…SEILAQIRKL (118 aa)) form a coiled coil. Basic and acidic residues predominate over residues 369-384 (REEYEKARSSTSRTEE). 2 stretches are compositionally biased toward polar residues: residues 525 to 545 (QNST…SMDN) and 568 to 579 (NSSIDMQVPRTQ). The segment covering 596 to 613 (CSDSESAGGSSESRSMDS) has biased composition (low complexity). A Phorbol-ester/DAG-type zinc finger spans residues 676-723 (AHTHKLRKLRAPSKCRECDSLVVFHGAECEECSLACHKKCLETLAIQC). One can recognise a Rho-GAP domain in the interval 737–950 (IDFAQVVKNS…LLIKHHQMIF (214 aa)). Residues 960 to 973 (TSPTVSQASFGSSI) are compositionally biased toward polar residues. Disordered stretches follow at residues 960-983 (TSPT…LSRH), 1016-1066 (MKTG…AKPV), 1083-1114 (SRNT…TNFY), 1149-1210 (PPSG…KPSD), and 1273-1337 (TVSR…AHFV). Residues 974–983 (QDKESKLSRH) are compositionally biased toward basic and acidic residues. Residues 1083–1092 (SRNTVEHDHS) are compositionally biased toward basic and acidic residues. Composition is skewed to polar residues over residues 1161–1177 (MASQ…SQSG) and 1295–1310 (VTLS…TEEL). Over residues 1325 to 1337 (RMQELEHREAHFV) the composition is skewed to basic and acidic residues.

In terms of biological role, GTPase activator for the Rho-type GTPases by converting them to an inactive GDP-bound state. Has strong activity toward RHOA, and weaker activity toward RAC1 and CDC42. The chain is Rho GTPase-activating protein 29 (arhgap29) from Danio rerio (Zebrafish).